The following is a 153-amino-acid chain: Lipoprotein signal peptidase (153 aa).

Helical transmembrane passes span 61–81 and 85–105; these read YFFV…LVKN and SLWL…NFID. Active-site residues include D114 and D130. A helical transmembrane segment spans residues 125 to 145; the sequence is IFNVADSYLTVGVLLLILILW.

This sequence belongs to the peptidase A8 family.

It is found in the cell membrane. The catalysed reaction is Release of signal peptides from bacterial membrane prolipoproteins. Hydrolyzes -Xaa-Yaa-Zaa-|-(S,diacylglyceryl)Cys-, in which Xaa is hydrophobic (preferably Leu), and Yaa (Ala or Ser) and Zaa (Gly or Ala) have small, neutral side chains.. It participates in protein modification; lipoprotein biosynthesis (signal peptide cleavage). This protein specifically catalyzes the removal of signal peptides from prolipoproteins. The polypeptide is Lipoprotein signal peptidase (Streptococcus thermophilus (strain CNRZ 1066)).